The following is a 1684-amino-acid chain: Protein MON2 homolog (1684 aa).

It belongs to the MON2 family.

May be required for traffic between late Golgi and early endosomes. This Drosophila melanogaster (Fruit fly) protein is Protein MON2 homolog (mon2).